Reading from the N-terminus, the 165-residue chain is Protein OPG091 (165 aa).

It belongs to the orthopoxvirus OPG091 family.

The protein localises to the virion. It is found in the host cytoplasm. Contributes to vaccinia virus virulence in mice but not to replication in cell culture. The polypeptide is Protein OPG091 (OPG091) (Vaccinia virus (strain Western Reserve) (VACV)).